Reading from the N-terminus, the 151-residue chain is Inorganic triphosphatase (151 aa).

The region spanning 1–148 (MTEIERKFLV…KRYKNKALAL (148 aa)) is the CYTH domain. Catalysis depends on Y27, which acts as the Proton acceptor.

As to quaternary structure, homodimer.

The catalysed reaction is triphosphate + H2O = phosphate + diphosphate. Its activity is regulated as follows. Activated by magnesium and mangenese ions, and inhibited by calcium, zinc and copper ions. Involved in the hydrolysis of the beta-gamma-phosphoanhydride linkage of triphosphate-containing substrates (inorganic or nucleoside-linked). Catalyzes the hydrolysis of inorganic triphosphate (PPPi). The enzyme has a strong preference for linear PPPi compared with cyclic PPPi (cyclic trimetaphosphate) and to the linear P4. The longer chains polyphosphate are not hydrolyzed. It has only a slight thiamine triphosphatase (ThTPase) activity. Nucleoside triphosphatase activity is negligible in the presence of magnesium, but a small activity is observed in the presence of manganese, in particular with GTP. In Nitrosomonas europaea (strain ATCC 19718 / CIP 103999 / KCTC 2705 / NBRC 14298), this protein is Inorganic triphosphatase.